The chain runs to 317 residues: Transaldolase (317 aa).

Lysine 132 (schiff-base intermediate with substrate) is an active-site residue.

Belongs to the transaldolase family. Type 1 subfamily. Homodimer.

The protein localises to the cytoplasm. It catalyses the reaction D-sedoheptulose 7-phosphate + D-glyceraldehyde 3-phosphate = D-erythrose 4-phosphate + beta-D-fructose 6-phosphate. It participates in carbohydrate degradation; pentose phosphate pathway; D-glyceraldehyde 3-phosphate and beta-D-fructose 6-phosphate from D-ribose 5-phosphate and D-xylulose 5-phosphate (non-oxidative stage): step 2/3. Transaldolase is important for the balance of metabolites in the pentose-phosphate pathway. In Shewanella amazonensis (strain ATCC BAA-1098 / SB2B), this protein is Transaldolase.